We begin with the raw amino-acid sequence, 353 residues long: Photosystem II protein D1 (353 aa).

Thr2 carries the post-translational modification N-acetylthreonine. Thr2 is subject to Phosphothreonine. Helical transmembrane passes span 29-46 (YIGWFGVLMIPTLLTATS), 118-133 (HFLLGVACYMGREWEL), and 142-156 (WIAIAYSAPVAAATA). His118 serves as a coordination point for chlorophyll a. Position 126 (Tyr126) interacts with pheophytin a. Positions 170 and 189 each coordinate [CaMn4O5] cluster. A helical transmembrane segment spans residues 197–218 (FHMLGVAGVFGGSLFSAMHGSL). His198 provides a ligand contact to chlorophyll a. A quinone-binding positions include His215 and 264-265 (SF). Residue His215 coordinates Fe cation. Position 272 (His272) interacts with Fe cation. Residues 274–288 (FLAAWPVIGIWFTAL) form a helical membrane-spanning segment. [CaMn4O5] cluster is bound by residues His332, Glu333, Asp342, and Ala344. The propeptide occupies 345–353 (TFEVSATNA).

This sequence belongs to the reaction center PufL/M/PsbA/D family. In terms of assembly, PSII is composed of 1 copy each of membrane proteins PsbA, PsbB, PsbC, PsbD, PsbE, PsbF, PsbH, PsbI, PsbJ, PsbK, PsbL, PsbM, PsbT, PsbX, PsbY, PsbZ, Psb30/Ycf12, at least 3 peripheral proteins of the oxygen-evolving complex and a large number of cofactors. It forms dimeric complexes. The D1/D2 heterodimer binds P680, chlorophylls that are the primary electron donor of PSII, and subsequent electron acceptors. It shares a non-heme iron and each subunit binds pheophytin, quinone, additional chlorophylls, carotenoids and lipids. D1 provides most of the ligands for the Mn4-Ca-O5 cluster of the oxygen-evolving complex (OEC). There is also a Cl(-1) ion associated with D1 and D2, which is required for oxygen evolution. The PSII complex binds additional chlorophylls, carotenoids and specific lipids. is required as a cofactor. Post-translationally, tyr-161 forms a radical intermediate that is referred to as redox-active TyrZ, YZ or Y-Z. In terms of processing, C-terminally processed by CTPA; processing is essential to allow assembly of the oxygen-evolving complex and thus photosynthetic growth.

The protein resides in the plastid membrane. The catalysed reaction is 2 a plastoquinone + 4 hnu + 2 H2O = 2 a plastoquinol + O2. Its function is as follows. Photosystem II (PSII) is a light-driven water:plastoquinone oxidoreductase that uses light energy to abstract electrons from H(2)O, generating O(2) and a proton gradient subsequently used for ATP formation. It consists of a core antenna complex that captures photons, and an electron transfer chain that converts photonic excitation into a charge separation. The D1/D2 (PsbA/PsbD) reaction center heterodimer binds P680, the primary electron donor of PSII as well as several subsequent electron acceptors. The polypeptide is Photosystem II protein D1 (Cuscuta gronovii (Common dodder)).